The following is a 58-amino-acid chain: Preprotein translocase subunit SecG (58 aa).

Residues 1-33 lie on the Cytoplasmic side of the membrane; that stretch reads MARRRKYEGLNPFVAAGLIKFSEEGELEKIKLS. Residues 34-55 form a helical membrane-spanning segment; that stretch reads PKAAIAISLAIIAAILALNLLL. At 56–58 the chain is on the extracellular side; sequence PPP.

Belongs to the SEC61-beta family. In terms of assembly, component of the protein translocase complex. Heterotrimer consisting of alpha (SecY), beta (SecG) and gamma (SecE) subunits. Can form oligomers of the heterotrimer.

It localises to the cell membrane. Involved in protein export. The function of the beta subunit is unknown, but it may be involved in stabilization of the trimeric complex. The protein is Preprotein translocase subunit SecG of Pyrobaculum calidifontis (strain DSM 21063 / JCM 11548 / VA1).